Consider the following 541-residue polypeptide: Methyl-accepting chemotaxis protein PcaY (541 aa).

At 1-10 the chain is on the cytoplasmic side; it reads MLANLKIRTG. A helical transmembrane segment spans residues 11-31; the sequence is MFWVLSLFSLTLLFSTASAWW. Residues 32–189 lie on the Periplasmic side of the membrane; that stretch reads AAVGSDQQIT…ESDRRLARAQ (158 aa). Residues 35-187 form a ligand-binding domain region; sequence GSDQQITELD…MLESDRRLAR (153 aa). A helical transmembrane segment spans residues 190 to 210; it reads LLSLCLLGMTVVLAVLCWAFI. Over 211–541 the chain is Cytoplasmic; the sequence is AQRVLHPLRE…MTALVGRFKV (331 aa). An HAMP domain is found at 212–264; sequence QRVLHPLREAGGHFRRIASGDLSVPVQGQGNNEIGQLFHELQRMQQSQRDTLG. The Methyl-accepting transducer domain maps to 269 to 505; it reads CARQLDAAAS…EVDRNLLNIR (237 aa). Residues 322 to 341 form a disordered region; the sequence is TSQTTSESNQLAAQSRRQVS.

Belongs to the methyl-accepting chemotaxis (MCP) protein family.

Its subcellular location is the cell inner membrane. Its function is as follows. Chemotactic-signal transducers respond to changes in the concentration of attractants and repellents in the environment, transduce a signal from the outside to the inside of the cell, and facilitate sensory adaptation through the variation of the level of methylation. PcaY is responsible for the detection of multiple aromatic and hydroaromatic compounds that are metabolized through the beta-ketoadipate catabolic pathway, including vanillin, vanillate, 4-hydroxybenzoate (4-HBA), benzoate and protocatechuate. It also senses several nonmetabolizable aromatic compounds. The sequence is that of Methyl-accepting chemotaxis protein PcaY from Pseudomonas putida (strain ATCC 700007 / DSM 6899 / JCM 31910 / BCRC 17059 / LMG 24140 / F1).